A 56-amino-acid polypeptide reads, in one-letter code: uncharacterized protein (56 aa).

This is an uncharacterized protein from Orgyia pseudotsugata (Douglas-fir tussock moth).